The primary structure comprises 440 residues: L-seryl-tRNA(Sec) selenium transferase (440 aa).

Lys-282 bears the N6-(pyridoxal phosphate)lysine mark.

It belongs to the SelA family. It depends on pyridoxal 5'-phosphate as a cofactor.

The protein localises to the cytoplasm. It catalyses the reaction L-seryl-tRNA(Sec) + selenophosphate + H(+) = L-selenocysteinyl-tRNA(Sec) + phosphate. Its pathway is aminoacyl-tRNA biosynthesis; selenocysteinyl-tRNA(Sec) biosynthesis; selenocysteinyl-tRNA(Sec) from L-seryl-tRNA(Sec) (bacterial route): step 1/1. Its function is as follows. Converts seryl-tRNA(Sec) to selenocysteinyl-tRNA(Sec) required for selenoprotein biosynthesis. This Campylobacter jejuni subsp. jejuni serotype O:6 (strain 81116 / NCTC 11828) protein is L-seryl-tRNA(Sec) selenium transferase.